Here is a 142-residue protein sequence, read N- to C-terminus: Large ribosomal subunit protein bL17 (142 aa).

It belongs to the bacterial ribosomal protein bL17 family. As to quaternary structure, part of the 50S ribosomal subunit. Contacts protein L32.

This chain is Large ribosomal subunit protein bL17, found in Rickettsia bellii (strain OSU 85-389).